We begin with the raw amino-acid sequence, 31 residues long: Cytochrome b6-f complex subunit 6 (31 aa).

Residues 4–26 (ITSYFGFLLAASTITTALFIGLS) traverse the membrane as a helical segment.

It belongs to the PetL family. The 4 large subunits of the cytochrome b6-f complex are cytochrome b6, subunit IV (17 kDa polypeptide, PetD), cytochrome f and the Rieske protein, while the 4 small subunits are PetG, PetL, PetM and PetN. The complex functions as a dimer.

The protein resides in the plastid. Its subcellular location is the chloroplast thylakoid membrane. Functionally, component of the cytochrome b6-f complex, which mediates electron transfer between photosystem II (PSII) and photosystem I (PSI), cyclic electron flow around PSI, and state transitions. PetL is important for photoautotrophic growth as well as for electron transfer efficiency and stability of the cytochrome b6-f complex. The polypeptide is Cytochrome b6-f complex subunit 6 (Acorus calamus (Sweet flag)).